The following is a 1354-amino-acid chain: Enhancer of mRNA-decapping protein 4 homolog (1354 aa).

The interval 18 to 38 (PLSASSSPPPSVHRSPRCGKA) is disordered. Ser32 carries the phosphoserine modification. WD repeat units follow at residues 309-348 (EEDS…VRNH) and 363-406 (CSLF…CLQT). The interval 552-581 (ERSSLNSKRSQTPEDNLLIKEEPESPNSGT) is disordered. Positions 554-565 (SSLNSKRSQTPE) are enriched in polar residues. Ser561 carries the post-translational modification Phosphoserine. Phosphothreonine is present on Thr563. The residue at position 576 (Ser576) is a Phosphoserine. At Thr581 the chain carries Phosphothreonine. Phosphoserine is present on residues Ser759, Ser762, and Ser763. A coiled-coil region spans residues 765–803 (SREVQEIMATQDDADAYEAELENLDDDDDDEEEELANSS). Over residues 788–799 (LDDDDDDEEEEL) the composition is skewed to acidic residues. Disordered regions lie at residues 788-811 (LDDD…AVDG) and 838-884 (NTNN…AGGT). A compositionally biased stretch (low complexity) spans 853–884 (NNNTSVGSNSNNNTATTLSTSNTSSSNNAGGT). Coiled coils occupy residues 893 to 936 (ELNA…HSKQ), 969 to 1036 (NEHK…QAQM), and 1159 to 1188 (KHRT…QVQE). Residue Ser1207 is modified to Phosphoserine. Phosphothreonine is present on residues Thr1211 and Thr1317. Phosphotyrosine is present on Tyr1320.

It belongs to the WD repeat EDC4 family. Homodimer. Interacts with Dcp1 and Dcp2. Interacts with Gyf.

It is found in the cytoplasm. Its subcellular location is the P-body. In terms of biological role, in the process of mRNA degradation, seems to play a role in mRNA decapping. Required for silencing a subset of endogenous miRNA targets. The protein is Enhancer of mRNA-decapping protein 4 homolog (Ge-1) of Drosophila melanogaster (Fruit fly).